A 315-amino-acid chain; its full sequence is Small ribosomal subunit protein uS9m (315 aa).

Residues 1 to 42 (MMASLRHSITSALRSSRQGCSKSAQWQSLDQQFGALRISSRS) constitute a mitochondrion transit peptide. The tract at residues 293-315 (PRKVERKKHGHVKARKMPTWVKR) is disordered. Positions 296 to 315 (VERKKHGHVKARKMPTWVKR) are enriched in basic residues.

This sequence belongs to the universal ribosomal protein uS9 family. Component of the mitochondrial small ribosomal subunit (mt-SSU). Mature N.crassa 74S mitochondrial ribosomes consist of a small (37S) and a large (54S) subunit. The 37S small subunit contains a 16S ribosomal RNA (16S mt-rRNA) and 32 different proteins. The 54S large subunit contains a 23S rRNA (23S mt-rRNA) and 42 different proteins.

The protein resides in the mitochondrion. Component of the mitochondrial ribosome (mitoribosome), a dedicated translation machinery responsible for the synthesis of mitochondrial genome-encoded proteins, including at least some of the essential transmembrane subunits of the mitochondrial respiratory chain. The mitoribosomes are attached to the mitochondrial inner membrane and translation products are cotranslationally integrated into the membrane. In Neurospora crassa (strain ATCC 24698 / 74-OR23-1A / CBS 708.71 / DSM 1257 / FGSC 987), this protein is Small ribosomal subunit protein uS9m (mrp-9).